A 358-amino-acid polypeptide reads, in one-letter code: Src kinase-associated phosphoprotein 2 (358 aa).

Phosphoserine is present on residues serine 6 and serine 9. The interval proline 60–proline 108 is disordered. Tyrosine 75 carries the post-translational modification Phosphotyrosine. 2 positions are modified to phosphoserine: serine 87 and serine 90. Residues phenylalanine 116–glutamine 219 form the PH domain. Phosphotyrosine is present on residues tyrosine 151 and tyrosine 197. Serine 223 is subject to Phosphoserine. Residues proline 227–lysine 293 are disordered. The segment covering proline 243–glutamine 253 has biased composition (low complexity). The segment covering isoleucine 255–threonine 270 has biased composition (acidic residues). Tyrosine 260 bears the Phosphotyrosine mark. Serine 272, serine 282, and serine 285 each carry phosphoserine. The span at lysine 274 to lysine 293 shows a compositional bias: basic and acidic residues. Residues aspartate 296–aspartate 357 form the SH3 domain.

This sequence belongs to the SKAP family. As to quaternary structure, interacts with FYB1, which is required for SKAP2 protein stability. Interacts with PTPNS1. Part of a complex consisting of SKAP2, FYB1 and PTPNS1. Part of a complex consisting of SKAP2, FYB1 and LILRB3. Interacts with LAT, GRB2, PTK2B, and PRAM1. May interact with actin. May interact with FYN, HCK and LYN. Interacts with FASLG.

Its subcellular location is the cytoplasm. In terms of biological role, may be involved in B-cell and macrophage adhesion processes. In B-cells, may act by coupling the B-cell receptor (BCR) to integrin activation. May play a role in src signaling pathway. This chain is Src kinase-associated phosphoprotein 2 (Skap2), found in Rattus norvegicus (Rat).